The following is a 266-amino-acid chain: Interleukin-1 beta (266 aa).

Positions 1–113 (MATVPEPINE…ETSSDEFLCD (113 aa)) are excised as a propeptide.

Belongs to the IL-1 family. Monomer. In its precursor form, weakly interacts with full-length MEFV; the mature cytokine does not interact at all. Interacts with integrins ITGAV:ITGBV and ITGA5:ITGB1; integrin-binding is required for IL1B signaling. Interacts with cargo receptor TMED10; the interaction is direct and is required for the secretion of IL1B mature form. Interacts with HSP90AB1; the interaction facilitates cargo translocation into the ERGIC. Interacts with HSP90B1; the interaction facilitates cargo translocation into the ERGIC.

It localises to the cytoplasm. Its subcellular location is the cytosol. It is found in the secreted. The protein resides in the lysosome. The protein localises to the extracellular exosome. In terms of biological role, potent pro-inflammatory cytokine. Initially discovered as the major endogenous pyrogen, induces prostaglandin synthesis, neutrophil influx and activation, T-cell activation and cytokine production, B-cell activation and antibody production, and fibroblast proliferation and collagen production. Promotes Th17 differentiation of T-cells. Synergizes with IL12/interleukin-12 to induce IFNG synthesis from T-helper 1 (Th1) cells. Plays a role in angiogenesis by inducing VEGF production synergistically with TNF and IL6. Involved in transduction of inflammation downstream of pyroptosis: its mature form is specifically released in the extracellular milieu by passing through the gasdermin-D (GSDMD) pore. The protein is Interleukin-1 beta (IL1B) of Bubalus carabanensis (Swamp type water buffalo).